A 367-amino-acid chain; its full sequence is Uptake hydrogenase small subunit (367 aa).

Positions 1 to 45 (MTPTETFYEVMRRQGVTRRSFLKFCSLTATALGLGPAYTSEIAHA) form a signal peptide, tat-type signal. 8 residues coordinate [4Fe-4S] cluster: cysteine 62, cysteine 65, cysteine 160, cysteine 194, histidine 232, cysteine 235, cysteine 260, and cysteine 266. Residues cysteine 275, cysteine 294, and cysteine 297 each coordinate [3Fe-4S] cluster.

It belongs to the [NiFe]/[NiFeSe] hydrogenase small subunit family. In terms of assembly, heterodimer of a large and a small subunit. Requires [4Fe-4S] cluster as cofactor. [3Fe-4S] cluster serves as cofactor. In terms of processing, predicted to be exported by the Tat system. The position of the signal peptide cleavage has been experimentally proven.

It is found in the cell membrane. It catalyses the reaction H2 + A = AH2. Its function is as follows. This enzyme recycles the H(2) produced by nitrogenase to increase the production of ATP and to protect nitrogenase against inhibition or damage by O(2) under carbon- or phosphate-limited conditions. This chain is Uptake hydrogenase small subunit (hoxS), found in Afipia carboxidovorans (strain ATCC 49405 / DSM 1227 / KCTC 32145 / OM5) (Oligotropha carboxidovorans).